The sequence spans 455 residues: MLCLMLCVLCWSRSDVAALGSVVENEDALLRHLFQGYQKWVRPVENSNDTIKVLFGLKISQLVDVDEKNQLMTTNVWLKQEWMDHKLSWNPEEYGGITAIRVPSESLWLPDIVLFENADGRFEGSLMTKAIVKYNGVVQWMPPASYKSSCTMELTFFPFDRQNCSMKFGSWTYDGSMVDLILVDENVDTKDFFDNGEWEILNAKGMKGNRKDGLYSYPFVTYSFVLRRLPLFYTLFLIIPCLGLSFLTVLVFYLPSDEGEKLSLSTSVLVSLTVFLLVIEEIIPSSSKVIPLIGEYLLFIMIFVTLSIIVTVFVINVHHRSSATYHPMAPWVKRLFLQKLPRLLCMKGHVDRYSFSDTEEKETTLKSKLPGKQKHKQAKDGEKVVIAFLEKAADSIRYISRHVKKDAFIRQVVQDWKFVAQVLDRIFLWLFLVVSVTGSVLIFTPALQMWLNSTL.

Positions 1 to 20 (MLCLMLCVLCWSRSDVAALG) are cleaved as a signal peptide. Over 21-229 (SVVENEDALL…VTYSFVLRRL (209 aa)) the chain is Extracellular. 2 N-linked (GlcNAc...) asparagine glycosylation sites follow: Asn48 and Asn163. Cys150 and Cys164 are oxidised to a cystine. A run of 3 helical transmembrane segments spans residues 230–254 (PLFY…VFYL), 262–279 (LSLS…LLVI), and 296–317 (YLLF…VINV). Residues 318 to 425 (HHRSSATYHP…WKFVAQVLDR (108 aa)) lie on the Cytoplasmic side of the membrane. A helical transmembrane segment spans residues 426 to 444 (IFLWLFLVVSVTGSVLIFT).

It belongs to the ligand-gated ion channel (TC 1.A.9) family. Acetylcholine receptor (TC 1.A.9.1) subfamily. Beta-3/CHRNB3 sub-subfamily. In terms of assembly, neuronal AChR seems to be composed of two different type of subunits: alpha and beta. CHRNB3/beta-3 subunit is only able to form functional nAChRs when co-assembled with another beta subunit. Participates in pentameric assemblies along with CHRNA4/alpha-4 and CHRNB2/beta-2 subunits and with CHRNA6/alpha-6 as well, forming stoichiometries such as (CHRNA3:CHRNB4)2:CHRNB3, (CHRNA4:CHRNB2)2:CHRNB3 or (CHRNA6:CHRNB2)2:CHRNB3. In terms of tissue distribution, relatively abundant in the developing retina and in the trigeminal ganglion.

The protein localises to the synaptic cell membrane. It is found in the cell membrane. The catalysed reaction is Ca(2+)(in) = Ca(2+)(out). It catalyses the reaction K(+)(in) = K(+)(out). It carries out the reaction Na(+)(in) = Na(+)(out). Activated by a myriad of ligands such as acetylcholine, cytisine, nicotine, choline and epibatidine. In terms of biological role, component of neuronal acetylcholine receptors (nAChRs) that function as pentameric, ligand-gated cation channels with high calcium permeability among other activities. nAChRs are excitatory neurotrasnmitter receptors formed by a collection of nAChR subunits known to mediate synaptic transmission in the nervous system and the neuromuscular junction. Each nAchR subunit confers differential attributes to channel properties, including activation, deactivation and desensitization kinetics, pH sensitivity, cation permeability, and binding to allosteric modulators. Has an accessory rather than functional role and is only able to form functional nAChRs when co-assembled with another beta subunit. Participates in pentameric assemblies along with CHRNA3, CHRNA4, CHRNA6, CHRNB2 and CHRNB4. Modulates receptor assembly and increases receptor sensitivity to nicotine when associated with CHRNB2, CHRNA4 and/or CHRNA6 as well as CHRNA3 and CHRNB4. Seems to play a role in nicotine addiction. The polypeptide is Neuronal acetylcholine receptor subunit beta-3 (CHRNB3) (Gallus gallus (Chicken)).